A 233-amino-acid polypeptide reads, in one-letter code: Putative N-acetylmannosamine-6-phosphate 2-epimerase (233 aa).

This sequence belongs to the NanE family.

The catalysed reaction is an N-acyl-D-glucosamine 6-phosphate = an N-acyl-D-mannosamine 6-phosphate. It functions in the pathway amino-sugar metabolism; N-acetylneuraminate degradation; D-fructose 6-phosphate from N-acetylneuraminate: step 3/5. In terms of biological role, converts N-acetylmannosamine-6-phosphate (ManNAc-6-P) to N-acetylglucosamine-6-phosphate (GlcNAc-6-P). This is Putative N-acetylmannosamine-6-phosphate 2-epimerase from Yersinia pseudotuberculosis serotype IB (strain PB1/+).